A 108-amino-acid chain; its full sequence is Peptidyl-prolyl cis-trans isomerase FKBP1A (108 aa).

The 89-residue stretch at 20-108 (GQTCVVHYTG…VFDVELLKLE (89 aa)) folds into the PPIase FKBP-type domain. Lys53 carries the post-translational modification N6-acetyllysine; alternate. An N6-succinyllysine; alternate modification is found at Lys53.

This sequence belongs to the FKBP-type PPIase family. FKBP1 subfamily. As to quaternary structure, interacts with TGFBR1; prevents TGFBR1 phosphorylation by TGFBR2 and stabilizes it in the inactive conformation. Interacts with ACVR1B and SMAD7. Identified in a complex composed of RYR1, PDE4D, PKA, FKBP1A and protein phosphatase 1 (PP1). Interacts directly with RYR2 and RYR3. Interacts with GLMN; rapamycin and FK506 abolish the interaction with GLMN in a dose dependent manner. Interacts directly with RYR1.

The protein resides in the cytoplasm. Its subcellular location is the cytosol. It localises to the sarcoplasmic reticulum membrane. It catalyses the reaction [protein]-peptidylproline (omega=180) = [protein]-peptidylproline (omega=0). With respect to regulation, inhibited by both FK506 and rapamycin. Keeps in an inactive conformation TGFBR1, the TGF-beta type I serine/threonine kinase receptor, preventing TGF-beta receptor activation in absence of ligand. Recruits SMAD7 to ACVR1B which prevents the association of SMAD2 and SMAD3 with the activin receptor complex, thereby blocking the activin signal. May modulate the RYR1 calcium channel activity. PPIases accelerate the folding of proteins. It catalyzes the cis-trans isomerization of proline imidic peptide bonds in oligopeptides. In Homo sapiens (Human), this protein is Peptidyl-prolyl cis-trans isomerase FKBP1A (FKBP1A).